Reading from the N-terminus, the 414-residue chain is Snake venom metalloproteinase atrolysin-B (414 aa).

Positions 1–20 (MIEVLLVTICLAVFPYQGSS) are cleaved as a signal peptide. Positions 21–190 (IILESGNVND…KASDLNLNPD (170 aa)) are excised as a propeptide. Gln191 bears the Pyrrolidone carboxylic acid mark. One can recognise a Peptidase M12B domain in the interval 197–393 (RYIELVVVAD…YKPQCILNKP (197 aa)). Ca(2+)-binding residues include Glu200 and Asp284. Cystine bridges form between Cys308–Cys388 and Cys348–Cys355. His333 is a Zn(2+) binding site. Glu334 is an active-site residue. Residues His337 and His343 each coordinate Zn(2+). Ca(2+)-binding residues include Cys388, Asn391, Val403, Asn406, Leu408, Glu410, and Glu413. Residues 394–414 (LRIDPVSTPVSGNELLEAGEE) constitute a propeptide that is removed on maturation.

Belongs to the venom metalloproteinase (M12B) family. P-I subfamily. In terms of assembly, monomer. Zn(2+) is required as a cofactor. In terms of processing, the N-terminus is blocked. In terms of tissue distribution, expressed by the venom gland.

It localises to the secreted. It catalyses the reaction Cleavage of 5-His-|-Leu-6, 10-His-|-Leu-11, 14-Ala-|-Leu-15, 16-Tyr-|-Leu-17 and 23-Gly-|-Phe-24 of insulin B chain. Identical to the cleavage of insulin B chain by atrolysin C. Also cleaves Xaa-|-Ser bonds in glucagon.. Its function is as follows. Snake venom metalloproteinase that impairs hemostasis in the envenomed animal. This is Snake venom metalloproteinase atrolysin-B from Crotalus atrox (Western diamondback rattlesnake).